The primary structure comprises 105 residues: MAHNHNHDHNHEHQHEVITLVDENGNETLFEILLTIDGREEFGKNYVLLVPAGAEEDEQGEIEIQAYSFTENADGTEGDLQPIPEDSDAEWDMIEEVFNSFLDEE.

This sequence belongs to the UPF0473 family.

The sequence is that of UPF0473 protein SAG2089 from Streptococcus agalactiae serotype V (strain ATCC BAA-611 / 2603 V/R).